A 707-amino-acid chain; its full sequence is Choline transporter-like protein 4 (707 aa).

At 1 to 32 (MGKKQKENEAYGNSAKYDPSFRGPIKNRGCTD) the chain is on the cytoplasmic side. The helical transmembrane segment at 33–53 (IICCVLFLVFILGYIVVGLVA) threads the bilayer. The Extracellular segment spans residues 54–227 (WVYGDPRQVL…KIFEDFAQSW (174 aa)). Residues N67, N185, N195, and N196 are each glycosylated (N-linked (GlcNAc...) asparagine). A helical membrane pass occupies residues 228 to 248 (YWILVALGVALVLSLLFILLL). Topologically, residues 249-250 (RL) are cytoplasmic. Residues 251-271 (VAAPLVLLLIVGVLAVLAYGI) form a helical membrane-spanning segment. Residues 272–307 (YHCWQQYRELRDQGVSITQLGFTANLSAYQNVKETW) are Extracellular-facing. N296 carries N-linked (GlcNAc...) asparagine glycosylation. Residues 308–328 (LAALIILAVLEGVLLLMLIFL) form a helical membrane-spanning segment. At 329–356 (RQRIRIAIALLKEASRAVGQMMSTMFYP) the chain is on the cytoplasmic side. Residues 357–377 (LVTFVLLVICIGYWAVTALYL) form a helical membrane-spanning segment. Over 378–452 (ATSGQPQYVY…GILGLFWTVN (75 aa)) the chain is Extracellular. 3 N-linked (GlcNAc...) asparagine glycosylation sites follow: N391, N403, and N413. Residues 453–473 (WVLALGQCVLAGAFASFYWAF) traverse the membrane as a helical segment. The Cytoplasmic segment spans residues 474–498 (HKPRDIPTFPLSSAFIRTLRYHTGS). The helical transmembrane segment at 499 to 519 (LAFGALILTLVQIARVILEYI) threads the bilayer. Over 520–557 (DHKLRGSQNPVARCIICCFKCCLWCLEKFIKFLNRNAY) the chain is Extracellular. Residues 558–578 (IMIAIYGKNFCVSAKNAFMLL) form a helical membrane-spanning segment. The Cytoplasmic segment spans residues 579–594 (MRNVVRVVVLDKVTDL). The chain crosses the membrane as a helical span at residues 595 to 615 (LLFFGKLLVVGGVGVLSFFFF). Over 616–635 (SGRIKGLGKDFKNPDLNYYW) the chain is Extracellular. The helical transmembrane segment at 636 to 656 (LPIMTSIMGAYVIASGFFSVF) threads the bilayer. Topologically, residues 657–707 (GMCVDTLFLCFLEDLERNDGSQERPYYMPKALLKILGKKNEVPTGGKNRKK) are cytoplasmic.

The protein belongs to the CTL (choline transporter-like) family. N-glycosylated; N-glycosylation of Asn-67 and Asn-391 is required for a proper thiamine pyrophosphate uptake. In terms of tissue distribution, highly expressed in intestine, kidney and stomach. Also expressed in testis and lung.

The protein localises to the membrane. It is found in the apical cell membrane. The catalysed reaction is choline(out) + n H(+)(in) = choline(in) + n H(+)(out). It catalyses the reaction thiamine diphosphate(out) = thiamine diphosphate(in). In terms of biological role, choline transporter that plays a role in the choline-acetylcholine system and is required to the efferent innervation of hair cells in the olivocochlear bundle for the maintenance of physiological function of outer hair cells and the protection of hair cells from acoustic injury. Also described as a thiamine pyrophosphate transporter in colon, may mediate the absorption of microbiota-generated thiamine pyrophosphate and contribute to host thiamine (vitamin B1) homeostasis. This chain is Choline transporter-like protein 4, found in Rattus norvegicus (Rat).